The primary structure comprises 1416 residues: MATTIQNNFRIRRNFGKINKIAEIPNLIAIQKSSYDKFLQADVPPEKREDTGLQGVFKSVFPIKDFNETSSLEFVSYHLEKPKYDVDECHQRGMTYSAPIKVVVRLVVWDKDEETGAQSIRDVKEQEVYFGEIPLMTENGTFIINGTERVVVSQLHRSPGAFFDHDKGKSHSSGKLLFNARIIPYRGSWIDFEFDHKDILYVRIDRRRKLPATVLLRALGGVPDTAKKTPIEFHGSAEEILKYYYDTETIRIEGKGKFEKDLNPDLLKGQRATRDIRDPKTNEIVVKKNRKFTESAIKKLVAAKMKSLPIEPEEVYTKISAEDVVDEQTGEVLLEVNEEVSEEKLEELRKRGIGEFKVLFIDNLNVLPSLRDTLMQDKISTPEEAIMEIYRRLRPGDPPTPETATNLFVNLFFNAERYDLSKVGRLKLNYKFGIEEPLDNTVVTKRDILEVVRFLIDLKNGTPNKDVDDIDHLGNRRVRAVGELLENQYRIGLVRMERAIKERMSLQEIETLMPHDLINAKPVTAVIKEFFGSSQLSQFMDQTNPLSEVTHKRRLSALGPGGLTRERAGFEVRDVHSTHYGRICPIETPEGPNIGLIASLSTYARVNEYGFVETPYRKVEKGRVTDEVSFYSALEEEKHIIAQANAPVDKKGVFTGNIVSCRKEGEYINARPDEVDLMDVSPNQLVSVAASLVPFLENDDANRALMGSNMQRQAVPLLRTRAPLVGTGIEGIVARDSGVCVVAKRDGVIQSVDAARIVVKADVPTSATDVANEVDIYNLIKYQRSNQNTCINQKPIVKPGERVKKGDVIADGPATEMGELALGQNVVVAFMPWQGYNFEDSILLSERFLKDDVFTSVHIEEFECVARDTKLGKEEITRDIPNVGEEALKDLDESGIIRIGAEVKPGDILVGKITPKGETQLSPEEKLLRAIFGEKAGDVRDSSLRVPPGVSGTVINAKVFSRKGVEKDERAKAIEEMEEAKLLKDQNDEIRIIQDSAFQKIRRLLLGKEVSGRLVDDKGNQLLKRGDVLDDALLDTVPQRYWGEIAVEGDVQDLVRKIVENFEEQKELVKLLFGEKIGRLKKGDELPPGVIKMVKVYVAIKRKLAVGDKMAGRHGNKGVVSRVLPEEDLPYLEDGRPVDIVLNPLGVPSRMNVGQILETHLGWAAKNVGWRLQEMIEKNFGPDQLRKKLKKAFEGVEGSDRLGQLIDELPAQELPKLATKLKEGMHVATPVFDGAHEDEMKALLGEGSATMQSILFDGRTGEPFDQDVTVGVMYMLKLHHLVDEKIHARSIGPYSLVTQQPLGGKAQFGGQRLGEMEVWAMEAYGAAYSLQEFLTVKSDDVVGRTRMYEAIVKGENTLESGLPESFNVLIKELQSLALDVELLETPEAKAAREQAEGELGGPLGTPRGAAAEKNTA.

Residues 1388–1416 are disordered; sequence AKAAREQAEGELGGPLGTPRGAAAEKNTA.

It belongs to the RNA polymerase beta chain family. In terms of assembly, the RNAP catalytic core consists of 2 alpha, 1 beta, 1 beta' and 1 omega subunit. When a sigma factor is associated with the core the holoenzyme is formed, which can initiate transcription.

The catalysed reaction is RNA(n) + a ribonucleoside 5'-triphosphate = RNA(n+1) + diphosphate. DNA-dependent RNA polymerase catalyzes the transcription of DNA into RNA using the four ribonucleoside triphosphates as substrates. This Anaeromyxobacter sp. (strain Fw109-5) protein is DNA-directed RNA polymerase subunit beta.